Reading from the N-terminus, the 248-residue chain is Triosephosphate isomerase (248 aa).

9–11 contacts substrate; it reads NWK. The Electrophile role is filled by histidine 94. Catalysis depends on glutamate 166, which acts as the Proton acceptor. Residues glycine 172, serine 212, and 233-234 contribute to the substrate site; that span reads GG.

This sequence belongs to the triosephosphate isomerase family. As to quaternary structure, homodimer.

It is found in the cytoplasm. The catalysed reaction is D-glyceraldehyde 3-phosphate = dihydroxyacetone phosphate. It functions in the pathway carbohydrate biosynthesis; gluconeogenesis. Its pathway is carbohydrate degradation; glycolysis; D-glyceraldehyde 3-phosphate from glycerone phosphate: step 1/1. In terms of biological role, involved in the gluconeogenesis. Catalyzes stereospecifically the conversion of dihydroxyacetone phosphate (DHAP) to D-glyceraldehyde-3-phosphate (G3P). This Clostridium botulinum (strain ATCC 19397 / Type A) protein is Triosephosphate isomerase.